The sequence spans 237 residues: Dynein axonemal assembly factor 19 (237 aa).

Residues 8–33 are a coiled coil; that stretch reads NFKALEKELQAALAADEKYKRENAAK.

This sequence belongs to the DNAAF19/PR46b family. In terms of assembly, homodimer.

The protein resides in the cytoplasm. Its subcellular location is the cell projection. It localises to the cilium. It is found in the flagellum. Its function is as follows. Dynein-attachment factor required for cilia motility. This Mus musculus (Mouse) protein is Dynein axonemal assembly factor 19 (Dnaaf19).